Here is a 1100-residue protein sequence, read N- to C-terminus: Regulator of nonsense transcripts 1 (1100 aa).

Over residues 42–53 the composition is skewed to low complexity; that stretch reads SQTQTQGQTQSQ. The segment at 42-67 is disordered; that stretch reads SQTQTQGQTQSQLDNQVNGPDGVLPN. One can recognise a Upf1 CH-rich domain in the interval 94–251; sequence TKDLPVHACS…NKLEELWKEN (158 aa). The Zn(2+) site is built by Cys102, Cys105, Cys116, Ser119, Cys124, His134, His138, Cys144, Cys162, Cys165, Cys188, and Cys192. Positions 102 to 134 are C3H; sequence CSYCGIHDPACVVYCNTSKKWFCNGRGNTSGSH. The CC/SHH/C stretch occupies residues 116 to 144; the sequence is CNTSKKWFCNGRGNTSGSHIVNHLVRAKC. Positions 162 to 192 are C4; that stretch reads CYNCGCRNVFLLGFIPAKADSVVVLLCRQPC. ATP is bound by residues Gln455, 475 to 479, Gln645, Tyr682, and Glu813; that span reads GTGKT. The disordered stretch occupies residues 978–1065; sequence LGQVNGPAAG…QPELSQDSYL (88 aa). The segment covering 982–993 has biased composition (low complexity); the sequence is NGPAAGRGAPKG. The span at 1012–1063 shows a compositional bias: polar residues; sequence SGQPNMPNSQASQDLVSQPFSQGPLTQGYITMSQPSQMSQPGLSQPELSQDS.

The protein belongs to the DNA2/NAM7 helicase family.

The protein resides in the cytoplasm. The protein localises to the P-body. It localises to the nucleus. It is found in the perinuclear region. In terms of biological role, RNA-dependent helicase and ATPase required for nonsense-mediated decay (NMD) of mRNAs containing premature stop codons. Is recruited to mRNAs upon translation termination and undergoes a cycle of phosphorylation and dephosphorylation; its phosphorylation appears to be a key step in NMD. The formation of an upf1-upf2-upf3 surveillance complex is believed to activate NMD. The sequence is that of Regulator of nonsense transcripts 1 from Danio rerio (Zebrafish).